Consider the following 177-residue polypeptide: MNGGHIQLIIGPMFSGKSTELIRRVRRYQIAQYKCITIKYTNDTRYGTGLWTHDKHNFSAMETTKLLNIIDAVTDFSVIGIDEGQFFPDIVEFCEYMANNGKIVIVAALDGTFQRKPFTTISNLIPLSEMVVKLTAVCMKCFKEASFSKRLGTETEIEIIGGEDMYQSVCRKCYINE.

An ATP-binding site is contributed by 11–18; sequence GPMFSGKS. E83 acts as the Proton acceptor in catalysis. Residue F113 participates in substrate binding. Residues C138 and C141 each coordinate Zn(2+). 157–161 contributes to the substrate binding site; sequence IEIIG. Residues C170 and C173 each coordinate Zn(2+).

Belongs to the thymidine kinase family. Homotetramer. Two molecules of substrate bind to each enzyme tetramer.

The enzyme catalyses thymidine + ATP = dTMP + ADP + H(+). Functionally, phosphorylates thymidine and thymidine analogs, such as azidothymidine (AZT). Part of the salvage pathway for pyrimidine deoxyribonucleotide synthesis. This Procyon lotor (Raccoon) protein is Thymidine kinase (OPG101).